The chain runs to 420 residues: Exodeoxyribonuclease 7 large subunit (420 aa).

Belongs to the XseA family. As to quaternary structure, heterooligomer composed of large and small subunits.

The protein resides in the cytoplasm. The catalysed reaction is Exonucleolytic cleavage in either 5'- to 3'- or 3'- to 5'-direction to yield nucleoside 5'-phosphates.. Bidirectionally degrades single-stranded DNA into large acid-insoluble oligonucleotides, which are then degraded further into small acid-soluble oligonucleotides. The protein is Exodeoxyribonuclease 7 large subunit of Helicobacter pylori (strain J99 / ATCC 700824) (Campylobacter pylori J99).